The following is a 469-amino-acid chain: 6-phospho-beta-galactosidase (469 aa).

Positions 18, 115, 158, 159, and 296 each coordinate D-galactose 6-phosphate. E159 functions as the Proton donor in the catalytic mechanism. E374 (nucleophile) is an active-site residue. D-galactose 6-phosphate contacts are provided by S429, W430, K436, and Y438.

The protein belongs to the glycosyl hydrolase 1 family.

It carries out the reaction a 6-phospho-beta-D-galactoside + H2O = D-galactose 6-phosphate + an alcohol. It functions in the pathway carbohydrate metabolism; lactose degradation; D-galactose 6-phosphate and beta-D-glucose from lactose 6-phosphate: step 1/1. This chain is 6-phospho-beta-galactosidase, found in Staphylococcus haemolyticus (strain JCSC1435).